The primary structure comprises 1146 residues: Myosin heavy chain kinase A (1146 aa).

A disordered region spans residues 1 to 25; it reads MFNIKKRKESITGIPPINVNSPQSV. Residues 100 to 120 are a coiled coil; the sequence is EQMEDQLEKTMKVVRNHTDSL. The disordered stretch occupies residues 158-191; that stretch reads IQEKKSTSSPLVKGGISGGGGSGGDDSFDGANIS. Residues 172–181 are compositionally biased toward gly residues; it reads GISGGGGSGG. Coiled coils occupy residues 187–241 and 297–502; these read GANI…KRIE and SKIE…ASIS. A pseudosubstrate/autoinhibitory domain region spans residues 500 to 551; that stretch reads SISPISSVPKSPITTKRSSIILNSPPMTSQQSSPKIQDLLSSSGSSSVSGIN. A compositionally biased stretch (polar residues) spans 521-534; it reads LNSPPMTSQQSSPK. The tract at residues 521–540 is disordered; the sequence is LNSPPMTSQQSSPKIQDLLS. The catalytic stretch occupies residues 552-852; that stretch reads ISSETGEMGI…KVGAKQLPKA (301 aa). The region spanning 564–808 is the Alpha-type protein kinase domain; sequence EFDPIINKWI…VCALLDLDVK (245 aa). 778–783 lines the ATP pocket; it reads GLGNLG. WD repeat units lie at residues 867-897, 910-938, 952-980, 993-1021, 1033-1061, 1073-1101, and 1114-1142; these read SFRERVNSIAFFDNQKLLCAGYGDGTYRVFD, GHRKSIESIACNSNYIFTSSPDNTIKVHI, GHTGEVNCVVANEKYLFSCSYDKTIKVWD, VHTKYIKTLALSGRYLFSGGNDQIIYVWD, GHEDWVLSLHCTASYLFSTSKDNVIKIWD, GHWNSVSSCVVKDRYLYSGSEDNSIKVWD, and SHSLGVKCLMVFNNQIISAAFDGSIKVWE.

Belongs to the protein kinase superfamily. Alpha-type protein kinase family. ALPK subfamily. Oligomer. Requires Mg(2+) as cofactor. It depends on Mn(2+) as a cofactor. In terms of processing, the N-terminus is blocked.

The enzyme catalyses L-threonyl-[myosin heavy-chain] + ATP = O-phospho-L-threonyl-[myosin heavy-chain] + ADP + H(+). Its function is as follows. Catalyzes its autophosphorylation, which is needed for enzymatic activity and phosphorylates myosin II heavy chain at a threonine in the C-terminal tail region. This phosphorylation is critical for regulating the assembly and disassembly of myosin II filament, affecting myosin localization during an array of cellular contractile events, including cytokinesis and capping of cell surface receptors as well as chemotactic cell locomotion. In Dictyostelium discoideum (Social amoeba), this protein is Myosin heavy chain kinase A (mhkA).